The chain runs to 436 residues: Trigger factor (436 aa).

Residues glycine 163–proline 248 enclose the PPIase FKBP-type domain.

Belongs to the FKBP-type PPIase family. Tig subfamily.

It is found in the cytoplasm. It carries out the reaction [protein]-peptidylproline (omega=180) = [protein]-peptidylproline (omega=0). Involved in protein export. Acts as a chaperone by maintaining the newly synthesized protein in an open conformation. Functions as a peptidyl-prolyl cis-trans isomerase. The sequence is that of Trigger factor from Levilactobacillus brevis (strain ATCC 367 / BCRC 12310 / CIP 105137 / JCM 1170 / LMG 11437 / NCIMB 947 / NCTC 947) (Lactobacillus brevis).